The sequence spans 185 residues: dTDP-4-dehydrorhamnose 3,5-epimerase (185 aa).

Residues arginine 23, glutamate 28, 47 to 49 (QDN), and arginine 59 each bind substrate. Histidine 62 functions as the Proton acceptor in the catalytic mechanism. Substrate contacts are provided by lysine 72 and histidine 119. Tyrosine 132 acts as the Proton donor in catalysis. The substrate site is built by aspartate 143 and lysine 168.

It belongs to the dTDP-4-dehydrorhamnose 3,5-epimerase family. In terms of assembly, homodimer.

The enzyme catalyses dTDP-4-dehydro-6-deoxy-alpha-D-glucose = dTDP-4-dehydro-beta-L-rhamnose. It functions in the pathway carbohydrate biosynthesis; dTDP-L-rhamnose biosynthesis. Its pathway is bacterial outer membrane biogenesis; LPS O-antigen biosynthesis. Catalyzes the epimerization of the C3' and C5'positions of dTDP-6-deoxy-D-xylo-4-hexulose, forming dTDP-6-deoxy-L-lyxo-4-hexulose. This Escherichia coli (strain K12) protein is dTDP-4-dehydrorhamnose 3,5-epimerase (rfbC).